The chain runs to 474 residues: Salutaridinol 7-O-acetyltransferase (474 aa).

Residue H163 is the Proton acceptor of the active site. Residues 213–234 (ERLTSPSGMSEIPFSSTPEDTE) are disordered. A compositionally biased stretch (polar residues) spans 214–230 (RLTSPSGMSEIPFSSTP). The Proton acceptor role is filled by D416.

This sequence belongs to the plant acyltransferase family. As to expression, expressed in root, stem, leaf and capsule of the mature plant. Restricted to sieve elements of the phloem adjacent or proximal to laticifers.

The catalysed reaction is (7S)-salutaridinol + acetyl-CoA = (7S)-O-acetylsalutaridinol + CoA. It participates in alkaloid biosynthesis; morphine biosynthesis. In terms of biological role, acetyltransferase involved in biosynthesis of morphinan-type benzylisoquinoline and opiate alkaloids natural products. Catalyzes the conversion of the phenanthrene alkaloid salutaridinol to salutaridinol-7-O-acetate, the immediate precursor of thebaine along the morphine biosynthetic pathway. Conversion of 7-O-acetylsalutaridinol into thebaine is spontaneous. The chain is Salutaridinol 7-O-acetyltransferase from Papaver somniferum (Opium poppy).